A 799-amino-acid chain; its full sequence is Armadillo repeat-containing protein wrm-1 (799 aa).

A compositionally biased stretch (basic and acidic residues) spans 1–10 (MEERGPDIEK). Residues 1 to 60 (MEERGPDIEKYGSQPCTPLSFDPMLPSTSRVATPVRPSSTLSARQAPASPFRAQPQNMEP) are disordered. Residues 26 to 43 (PSTSRVATPVRPSSTLSA) show a composition bias toward polar residues. The stretch at 454-496 (ESIRRVIQVVGSDDATIAERATGVLRNIGQPNKQNKVIMVRNG) is one ARM repeat.

In terms of assembly, interacts (independently of ARM repeat) with nhr-25. Component of the beta-catenin-lit-1 complex (also called the lit-1/wrm-1 complex or the wrm-1/lit-1 kinase complex) at least composed of lit-1 and wrm-1. Interacts (via N-terminus) with lit-1; the interaction is direct and activates lit-1 kinase activity which leads to the phosphorylation of pop-1. This promotes pop-1 interaction with par-5 and translocation of pop-1 from the nucleus to the cytoplasm.

It localises to the cytoplasm. It is found in the cell cortex. Its subcellular location is the nucleus. Antagonistic role in the Wnt signaling pathway that operates in embryogenesis. When located at the cortex it has been shown to inhibit Wnt signaling during asymmetric cell division but when relocated to the nucleus it shows positive regulation. Has a role in blastomere signaling during endoderm specification. Component of the beta-catenin-lit-1 complex which promotes phosphorylation, down-regulation and subcellular relocation of pop-1. Within the complex, activates lit-1-dependent kinase activity. Can substitute for bar-1 indicating functional redundancy. Appears to have a role in centrosome positioning. Involved in the development of distal tip cells (DTC) by regulating the asymmetric distribution of cye-1 and cki-1 between the daughters of Z1.a and Z4.p cells. This Caenorhabditis briggsae protein is Armadillo repeat-containing protein wrm-1.